Consider the following 306-residue polypeptide: Pantothenate kinase (306 aa).

91 to 98 (GSVAVGKS) contacts ATP.

The protein belongs to the prokaryotic pantothenate kinase family.

It is found in the cytoplasm. The catalysed reaction is (R)-pantothenate + ATP = (R)-4'-phosphopantothenate + ADP + H(+). It functions in the pathway cofactor biosynthesis; coenzyme A biosynthesis; CoA from (R)-pantothenate: step 1/5. The sequence is that of Pantothenate kinase from Streptococcus equi subsp. zooepidemicus (strain H70).